A 373-amino-acid chain; its full sequence is Glutamate 5-kinase (373 aa).

An ATP-binding site is contributed by K15. Substrate is bound by residues S55, D142, and N154. ATP contacts are provided by residues 174–175 (TD) and 216–222 (TGGMATK). The 79-residue stretch at 281-359 (AGRIIVDDGA…SRIEAILGYR (79 aa)) folds into the PUA domain.

The protein belongs to the glutamate 5-kinase family.

The protein resides in the cytoplasm. It carries out the reaction L-glutamate + ATP = L-glutamyl 5-phosphate + ADP. It functions in the pathway amino-acid biosynthesis; L-proline biosynthesis; L-glutamate 5-semialdehyde from L-glutamate: step 1/2. Functionally, catalyzes the transfer of a phosphate group to glutamate to form L-glutamate 5-phosphate. The chain is Glutamate 5-kinase from Pelobacter propionicus (strain DSM 2379 / NBRC 103807 / OttBd1).